We begin with the raw amino-acid sequence, 387 residues long: Sulfate adenylyltransferase (387 aa).

This sequence belongs to the sulfate adenylyltransferase family.

It carries out the reaction sulfate + ATP + H(+) = adenosine 5'-phosphosulfate + diphosphate. The protein operates within sulfur metabolism; hydrogen sulfide biosynthesis; sulfite from sulfate: step 1/3. This Deinococcus radiodurans (strain ATCC 13939 / DSM 20539 / JCM 16871 / CCUG 27074 / LMG 4051 / NBRC 15346 / NCIMB 9279 / VKM B-1422 / R1) protein is Sulfate adenylyltransferase (sat).